The chain runs to 452 residues: Ethanolamine kinase 1 (452 aa).

Residues 26–64 (AVQTRIGNSAASRRSPAARPPVPAPPALPRGRPGTEGST) form a disordered region. A compositionally biased stretch (pro residues) spans 43–53 (ARPPVPAPPAL).

This sequence belongs to the choline/ethanolamine kinase family. As to expression, expressed in kidney, liver, placenta, heart, leukocyte, ovary and testis.

It is found in the cytoplasm. It carries out the reaction ethanolamine + ATP = phosphoethanolamine + ADP + H(+). Its pathway is phospholipid metabolism; phosphatidylethanolamine biosynthesis; phosphatidylethanolamine from ethanolamine: step 1/3. Highly specific for ethanolamine phosphorylation. May be a rate-controlling step in phosphatidylethanolamine biosynthesis. This is Ethanolamine kinase 1 from Homo sapiens (Human).